The sequence spans 403 residues: Metacaspase-7 (403 aa).

Catalysis depends on residues His-86 and Cys-139. S-nitrosocysteine is present on Cys-139.

It belongs to the peptidase C14B family. In terms of processing, proteolytically processed; by an autocatalytic mechanism. Expressed in roots, flowers and siliques.

In Arabidopsis thaliana (Mouse-ear cress), this protein is Metacaspase-7 (AMC7).